Consider the following 285-residue polypeptide: Protease HtpX homolog (285 aa).

2 helical membrane passes run 7 to 27 and 30 to 50; these read TAML…MIGG and GMTI…WFSD. Zn(2+) is bound at residue His-131. Residue Glu-132 is part of the active site. Position 135 (His-135) interacts with Zn(2+). 2 helical membrane-spanning segments follow: residues 146 to 166 and 177 to 197; these read ITAT…FFGG and IAGI…QMAI. Glu-202 provides a ligand contact to Zn(2+).

This sequence belongs to the peptidase M48B family. Requires Zn(2+) as cofactor.

The protein resides in the cell inner membrane. This Burkholderia multivorans (strain ATCC 17616 / 249) protein is Protease HtpX homolog.